We begin with the raw amino-acid sequence, 175 residues long: Gamma-crystallin B (175 aa).

Beta/gamma crystallin 'Greek key' domains follow at residues 2–40 (GKIT…RVDS) and 41–83 (GCWM…RLIP). The interval 84–88 (QHSGT) is connecting peptide. Beta/gamma crystallin 'Greek key' domains follow at residues 89–129 (YRMR…NVME) and 130–172 (GCWV…RRVM).

Belongs to the beta/gamma-crystallin family.

Functionally, crystallins are the dominant structural components of the vertebrate eye lens. In Rattus norvegicus (Rat), this protein is Gamma-crystallin B (Crygb).